Reading from the N-terminus, the 91-residue chain is Small ribosomal subunit protein uS19 (91 aa).

It belongs to the universal ribosomal protein uS19 family.

Functionally, protein S19 forms a complex with S13 that binds strongly to the 16S ribosomal RNA. The polypeptide is Small ribosomal subunit protein uS19 (Erythrobacter litoralis (strain HTCC2594)).